The following is a 328-amino-acid chain: NADH-quinone oxidoreductase subunit H 2 (328 aa).

Helical transmembrane passes span 3–23 (LIVA…ILLL), 77–97 (FLFK…FAAI), 119–139 (VALL…IFGG), 165–185 (MGFA…LDIV), 191–211 (VWNV…GLAE), 250–270 (MVLV…GVLI), 272–292 (LPPL…FMWF), and 307–327 (IGWK…GVVF).

The protein belongs to the complex I subunit 1 family. As to quaternary structure, NDH-1 is composed of 14 different subunits. Subunits NuoA, H, J, K, L, M, N constitute the membrane sector of the complex.

The protein resides in the cell inner membrane. It catalyses the reaction a quinone + NADH + 5 H(+)(in) = a quinol + NAD(+) + 4 H(+)(out). Its function is as follows. NDH-1 shuttles electrons from NADH, via FMN and iron-sulfur (Fe-S) centers, to quinones in the respiratory chain. The immediate electron acceptor for the enzyme in this species is believed to be ubiquinone. Couples the redox reaction to proton translocation (for every two electrons transferred, four hydrogen ions are translocated across the cytoplasmic membrane), and thus conserves the redox energy in a proton gradient. This subunit may bind ubiquinone. This chain is NADH-quinone oxidoreductase subunit H 2, found in Rhizobium meliloti (strain 1021) (Ensifer meliloti).